The primary structure comprises 328 residues: Gonadotropin-releasing hormone receptor (328 aa).

Residues 1–38 (MANRAYLEQKQTQCSIINSSFSMTHRDLPTLTLSGKIR) lie on the Extracellular side of the membrane. N18 carries an N-linked (GlcNAc...) asparagine glycan. Residues 39 to 58 (VMVTFFLFLVSTAFNASFLM) traverse the membrane as a helical segment. The Cytoplasmic portion of the chain corresponds to 59 to 77 (KLQRQTQKKEEVKKLTRMK). The helical transmembrane segment at 78-97 (VLLKHLTLANLLETVIVMPL) threads the bilayer. At 98-115 (DGIWNVTVQWYAGEFLCK) the chain is on the extracellular side. N-linked (GlcNAc...) asparagine glycosylation occurs at N102. Residues C114 and C196 are joined by a disulfide bond. A helical membrane pass occupies residues 116–137 (ALSYLKLFSMYAPAFMMVVISL). Topologically, residues 138 to 164 (DRFLAITRPLAVKSNTKVGQSLIAVAW) are cytoplasmic. A helical transmembrane segment spans residues 165-184 (FLSIVLAGPQLYIFRMIYVE). Over 185-212 (DISGQTGNFSQCVTHCSFPEWWQEAFYN) the chain is Extracellular. An N-linked (GlcNAc...) asparagine glycan is attached at N192. A helical transmembrane segment spans residues 213 to 232 (LLTFSCLFIGPLLIMLVCNA). Residues 233–281 (KIIFTLTQVLHQDPHELQLNRSKNNIPRARLRTLKMTVAFATLFTICWT) lie on the Cytoplasmic side of the membrane. Residues 282-300 (PYYVLGIWYWFDPEMLNRV) traverse the membrane as a helical segment. At 301 to 306 (SDPVNH) the chain is on the extracellular side. Residues 307 to 326 (FFFLFGLLNPCFDPLIYGYF) traverse the membrane as a helical segment. At 327 to 328 (SL) the chain is on the cytoplasmic side.

It belongs to the G-protein coupled receptor 1 family.

Its subcellular location is the cell membrane. Functionally, receptor for gonadotropin releasing hormone (GnRH) that mediates the action of GnRH to stimulate the secretion of the gonadotropic hormones luteinizing hormone (LH) and follicle-stimulating hormone (FSH). This receptor mediates its action by association with G-proteins that activate a phosphatidylinositol-calcium second messenger system. The chain is Gonadotropin-releasing hormone receptor (GNRHR) from Trichosurus vulpecula (Brush-tailed possum).